Here is a 214-residue protein sequence, read N- to C-terminus: rRNA methyltransferase 2, mitochondrial (214 aa).

Residues 1–18 (MFSTKKSQGNLHKYIQRQ) constitute a mitochondrion transit peptide. Residues 63–66 (PGSW), Asp-83, 100–101 (DI), and Asp-125 contribute to the S-adenosyl-L-methionine site. Lys-169 acts as the Proton acceptor in catalysis.

Belongs to the class I-like SAM-binding methyltransferase superfamily. RNA methyltransferase RlmE family.

Its subcellular location is the mitochondrion. The enzyme catalyses a uridine in rRNA + S-adenosyl-L-methionine = a 2'-O-methyluridine in rRNA + S-adenosyl-L-homocysteine + H(+). Functionally, S-adenosyl-L-methionine-dependent 2'-O-ribose methyltransferase that catalyzes the formation of 2'-O-methyluridine at position 808 (Um808) in the mitochondrial large subunit ribosomal RNA (mtLSU rRNA), a universally conserved modification in the peptidyl transferase domain of the mtLSU rRNA. This activity may require prior 2'-O-methylguanosine modification at position 809 (Gm809) by MRM3. Essential for late-stage assembly of mtLSU required for efficient translation of mitochondrial DNA encoded proteins; methyltransferase activity is not required for this function. Essential for mitochondrial respiratory function. This Caenorhabditis elegans protein is rRNA methyltransferase 2, mitochondrial.